The sequence spans 649 residues: Echinoderm microtubule-associated protein-like 2 (649 aa).

Residues 10-649 (KEVIFSMEEG…DTSVLQWRVA (640 aa)) form a tandem atypical propeller in EMLs region. WD repeat units lie at residues 56–93 (KLDWVYGYRGRDCRANLYLLPTGEVVYFVASVAVLYSV), 97–144 (RQRH…VWDS), 151–192 (HVLG…VWDW), 195–234 (ESKVVDSKCSNEAVLVATFHPTDPSLLITCGKSHIYFWSL), 241–280 (KRQGLFEKHEKPKYVLCVTFLEGGDVVTGDSGGNLYVWGK), 285–323 (ITQEVQGAHDGGVFALCALRDGTLVSGGGRDRRVVLWGS), 369–406 (FSLLVQGHVEELWGLATHPSRAQFVTCGQDKLVHLWSS), 410–447 (QPVWSRSIEDPARSAGFHPSGSVLAVGTVTGRWLLLDT), 452–489 (LVAIHTDGNEQISVVSFSPDGAYLAVGSHDNLVYVYTV), 495–535 (KVSR…YWDP), 564–602 (FGIWPEGADGTDINAVARSHDGKLLVSADDFGKVHLFSY), and 609–648 (ALSHKYGGHSSHVTNVAFLWDDSMALTTGGKDTSVLQWRV). The stretch at 65–106 (GRDCRANLYLLPTGEVVYFVASVAVLYSVEEQRQRHYLGHND) forms a coiled coil.

It belongs to the WD repeat EMAP family. In terms of assembly, interacts with GRID2 and may also interact with GRID1. Interacts with EML3. Binds unpolymerized tubulins via its WD repeat region.

It is found in the cytoplasm. The protein localises to the cytoskeleton. It localises to the spindle. Its function is as follows. Tubulin binding protein that inhibits microtubule nucleation and growth, resulting in shorter microtubules. In Mus musculus (Mouse), this protein is Echinoderm microtubule-associated protein-like 2 (Eml2).